The following is a 215-amino-acid chain: Cytochrome b6 (215 aa).

Residues 32 to 52 form a helical membrane-spanning segment; that stretch reads IFYCLGGITLTCFLVQVATGF. Cysteine 35 is a binding site for heme c. Heme b-binding residues include histidine 86 and histidine 100. 3 helical membrane-spanning segments follow: residues 90–110, 116–136, and 186–206; these read ASMM…TGGF, LTWV…VTGY, and LHTF…FLMI. Heme b-binding residues include histidine 187 and histidine 202.

The protein belongs to the cytochrome b family. PetB subfamily. As to quaternary structure, the 4 large subunits of the cytochrome b6-f complex are cytochrome b6, subunit IV (17 kDa polypeptide, PetD), cytochrome f and the Rieske protein, while the 4 small subunits are PetG, PetL, PetM and PetN. The complex functions as a dimer. It depends on heme b as a cofactor. Heme c serves as cofactor.

The protein localises to the plastid. The protein resides in the chloroplast thylakoid membrane. In terms of biological role, component of the cytochrome b6-f complex, which mediates electron transfer between photosystem II (PSII) and photosystem I (PSI), cyclic electron flow around PSI, and state transitions. The chain is Cytochrome b6 from Oenothera elata subsp. hookeri (Hooker's evening primrose).